The following is a 165-amino-acid chain: Protein SprT (165 aa).

One can recognise a SprT-like domain in the interval 10 to 158 (EACYRQAEHF…CRRCKATLVF (149 aa)). Position 69 (His-69) interacts with Zn(2+). Glu-70 is a catalytic residue. His-73 serves as a coordination point for Zn(2+).

It belongs to the SprT family. Zn(2+) is required as a cofactor.

It is found in the cytoplasm. This chain is Protein SprT, found in Pseudomonas aeruginosa (strain UCBPP-PA14).